The following is a 222-amino-acid chain: NAD(P)H-hydrate epimerase (222 aa).

The 201-residue stretch at 9 to 209 (MQQIDSYTIE…DIGLRLPEDF (201 aa)) folds into the YjeF N-terminal domain. 57 to 61 (NNGAD) contributes to the (6S)-NADPHX binding site. Positions 58 and 119 each coordinate K(+). (6S)-NADPHX contacts are provided by residues 123 to 129 (GVGLNNT) and Asp152. Residue Thr155 participates in K(+) binding.

This sequence belongs to the NnrE/AIBP family. K(+) is required as a cofactor.

The catalysed reaction is (6R)-NADHX = (6S)-NADHX. It carries out the reaction (6R)-NADPHX = (6S)-NADPHX. Its function is as follows. Catalyzes the epimerization of the S- and R-forms of NAD(P)HX, a damaged form of NAD(P)H that is a result of enzymatic or heat-dependent hydration. This is a prerequisite for the S-specific NAD(P)H-hydrate dehydratase to allow the repair of both epimers of NAD(P)HX. This Leuconostoc citreum (strain KM20) protein is NAD(P)H-hydrate epimerase.